The following is a 234-amino-acid chain: Uridylate kinase (234 aa).

10-11 (GS) is a binding site for ATP. Position 44 (glycine 44) interacts with UMP. 2 residues coordinate ATP: glycine 45 and arginine 49. UMP contacts are provided by residues aspartate 66 and 114 to 120 (ITPGQTT). 3 residues coordinate ATP: threonine 140, tyrosine 146, and aspartate 149.

Belongs to the UMP kinase family. Homohexamer.

It is found in the cytoplasm. It catalyses the reaction UMP + ATP = UDP + ADP. Its pathway is pyrimidine metabolism; CTP biosynthesis via de novo pathway; UDP from UMP (UMPK route): step 1/1. Inhibited by UTP. In terms of biological role, catalyzes the reversible phosphorylation of UMP to UDP. This is Uridylate kinase from Methanoregula boonei (strain DSM 21154 / JCM 14090 / 6A8).